A 220-amino-acid chain; its full sequence is Tumor protein p53-inducible nuclear protein 2 (220 aa).

Positions 1-12 (MFQRLSSLFFST) are enriched in low complexity. Disordered regions lie at residues 1 to 24 (MFQRLSSLFFSTPSPPEDPDCPRA), 41 to 69 (PDSYAAPPSPGAAPAPAGRPPPAPSLMDE), and 119 to 220 (PGSP…QFNY). The residue at position 14 (Ser-14) is a Phosphoserine. Residues 26 to 41 (VSEEDEVDGWLIIDLP) carry the LIR motif. Residues 47–64 (PPSPGAAPAPAGRPPPAP) are compositionally biased toward pro residues. A Phosphoserine modification is found at Ser-136. Over residues 152–170 (HAAPLPARAALLEKAGQVR) the composition is skewed to low complexity. Residues 205-220 (NQSSFIYQPCQRQFNY) show a composition bias toward polar residues.

As to quaternary structure, interacts with VMP1, GABARAP, GABARAPL1, GABARAPL2, MAP1LC3A, MAP1LC3B, MAP1LC3C and THRA.

The protein localises to the cytoplasm. It localises to the cytosol. Its subcellular location is the nucleus. The protein resides in the PML body. It is found in the cytoplasmic vesicle. The protein localises to the autophagosome. Its function is as follows. Dual regulator of transcription and autophagy. Positively regulates autophagy and is required for autophagosome formation and processing. May act as a scaffold protein that recruits MAP1LC3A, GABARAP and GABARAPL2 and brings them to the autophagosome membrane by interacting with VMP1 where, in cooperation with the BECN1-PI3-kinase class III complex, they trigger autophagosome development. Acts as a transcriptional activator of THRA. The chain is Tumor protein p53-inducible nuclear protein 2 (TP53INP2) from Homo sapiens (Human).